The sequence spans 160 residues: Ribosome-binding factor A (160 aa).

Residues 112-122 show a composition bias toward basic and acidic residues; it reads KARQSDEKVRE. The tract at residues 112–160 is disordered; that stretch reads KARQSDEKVREASAGATYAGEADPYRKPDEDETDTEGAVEADETDDTAK. A compositionally biased stretch (acidic residues) spans 141 to 160; that stretch reads EDETDTEGAVEADETDDTAK.

Belongs to the RbfA family. In terms of assembly, monomer. Binds 30S ribosomal subunits, but not 50S ribosomal subunits or 70S ribosomes.

The protein resides in the cytoplasm. In terms of biological role, one of several proteins that assist in the late maturation steps of the functional core of the 30S ribosomal subunit. Associates with free 30S ribosomal subunits (but not with 30S subunits that are part of 70S ribosomes or polysomes). Required for efficient processing of 16S rRNA. May interact with the 5'-terminal helix region of 16S rRNA. The chain is Ribosome-binding factor A from Streptomyces coelicolor (strain ATCC BAA-471 / A3(2) / M145).